The following is a 199-amino-acid chain: TATA-box-binding protein (199 aa).

2 consecutive repeat copies span residues 10-86 (IENI…VKLL) and 101-177 (VQNI…YNQL).

This sequence belongs to the TBP family.

General factor that plays a role in the activation of archaeal genes transcribed by RNA polymerase. Binds specifically to the TATA box promoter element which lies close to the position of transcription initiation. The chain is TATA-box-binding protein from Pyrobaculum islandicum (strain DSM 4184 / JCM 9189 / GEO3).